The sequence spans 130 residues: Cystatin (130 aa).

The signal sequence occupies residues 1 to 19 (MEWKIVVPLLAVAFTVANA). The Secondary area of contact motif lies at 67 to 71 (QVVSG). Disulfide bonds link Cys85-Cys94 and Cys108-Cys128.

Belongs to the cystatin family. As to expression, ubiquitous expression including brain, white muscle, heart, gill, kidney, spleen, liver and skin with the highest and lowest level in brain and gill, respectively.

The protein localises to the secreted. Functionally, cysteine proteinase inhibitor. The chain is Cystatin from Oncorhynchus keta (Chum salmon).